Reading from the N-terminus, the 832-residue chain is Cadherin-like protein 26 (832 aa).

Residues 1-27 form the signal peptide; the sequence is MAMRSGRHPSLLLLLVLLLWLLQVSII. Residues 28-614 lie on the Extracellular side of the membrane; the sequence is DSVQQETDDL…ELADAEVGLH (587 aa). 4 Cadherin domains span residues 35-165, 166-275, 276-396, and 397-500; these read DDLT…APQF, PEKE…RPAF, TQEN…PPAF, and HPQS…VPTL. N-linked (GlcNAc...) asparagine glycosylation is found at asparagine 81, asparagine 85, asparagine 171, and asparagine 177. A glycan (N-linked (GlcNAc...) asparagine) is linked at asparagine 462. The chain crosses the membrane as a helical span at residues 615-635; sequence VGALFPVCAAFVALAVALLFL. Topologically, residues 636–832 are cytoplasmic; sequence LRCYFVLEPK…EIYSESGVPS (197 aa). The disordered stretch occupies residues 813 to 832; it reads SLGSKATPFEEIYSESGVPS.

In terms of assembly, homodimer. Component of a cadherin:catenin adhesion complex composed of at least of CDH26, beta-catenin/CTNNB1, alpha-catenin/CTNNA1 and p120 catenin/CTNND1. N-glycosylated. In terms of tissue distribution, expressed by epithelial cells of gastrointestinal tissue.

It localises to the cell membrane. Cadherins are calcium-dependent cell adhesion proteins. They preferentially interact with themselves in a homophilic manner in connecting cells; cadherins may thus contribute to the sorting of heterogeneous cell types. Ligand for integrins alpha-E/beta-7, ITGAE:ITGAB7, alpha-4/beta-7, ITGA4:ITGAB7 and alpha-4/beta-1, ITGA4:ITGAB1 through which modulates CD4(+) T cells activation. The chain is Cadherin-like protein 26 (CDH26) from Homo sapiens (Human).